Here is an 899-residue protein sequence, read N- to C-terminus: MTSESSPLLHYRLFSVSDGGLGPPDSSPIMTDAVTVGTGPTQRKLSTFFGVVVPTVLSMFSIVVFMRIGFVVGHAGLLQSLLMLFVAYVIIWLTVLSVCAISTNGAVQGGGAYFMISRTLGPEFGGSIGLMFYLANVFACGVYVLGLVEAVLDVFGRDPSDVTDSLRSLPQGYGYSFLYASIILLLCMAICLVGASIYSQASFFIFLLVFVVLLTILISFLAVRPLTVSIRHGGNVTMTGVYTGINSSTLHNNLQADYSLDYTTGNLMNFATVFAVMFNGCTGIMAGCNLSGELKQPSRSIPMGTIIAVIITFFVYLILFIFTAFTCDRTLLREDYGFFRSINIWPPFVLIGVYATSLSASMSTLIGASRILHALAKDDLFGVLLAPAKLVSKGGNPWGAVVYTWALVQLVLLAGKLNTIAGIVTVFYLIAYAAIDLACLALEWASAPNFRPTFRFFSWHTCLLGILSSLVMMFLINPAYASGSIVLLLLLLGSIHFRSSSSSWGYISQALIFHQVRKYLLLLDVRKDHVKFWRPQILLMVSNPRTSSQLIRFVNDLKKGGLYILGHVETGDLDTLPSDPVQTHYSFWLSLVDKLNVKAFVDLTLCPSVRQGTQHLLRITGLGGMKPNTVVLGFYDDACPDDYFLQDSLFTPGLSPKDDAFGVDATSLQAHFPPARDPETPRLLSAKDYVSMICDALKMHKNIVLARNFPLLVRPEASSSSPATYIDVWPLDLLRPQASAYVDVCSLFLLQMACILNMAASWRRYQLRVFLCVESRGGSDGASGWLAAEAKFRELLSKLRIRALIRVVAWDRVAAFRVQNMGGQVLNREPISSEYLNAAKSAVTDEGGTETAVRFLYLPRPPADSSLHERYLEELDTLTSGLGPTLLIHGLTPVTCTEL.

The Cytoplasmic portion of the chain corresponds to 1-44 (MTSESSPLLHYRLFSVSDGGLGPPDSSPIMTDAVTVGTGPTQRK). A helical membrane pass occupies residues 45-65 (LSTFFGVVVPTVLSMFSIVVF). Topologically, residues 66 to 80 (MRIGFVVGHAGLLQS) are extracellular. A helical transmembrane segment spans residues 81 to 101 (LLMLFVAYVIIWLTVLSVCAI). At 102-127 (STNGAVQGGGAYFMISRTLGPEFGGS) the chain is on the cytoplasmic side. The chain crosses the membrane as a helical span at residues 128–148 (IGLMFYLANVFACGVYVLGLV). The Extracellular segment spans residues 149-176 (EAVLDVFGRDPSDVTDSLRSLPQGYGYS). The chain crosses the membrane as a helical span at residues 177 to 197 (FLYASIILLLCMAICLVGASI). The Cytoplasmic portion of the chain corresponds to 198 to 202 (YSQAS). A helical membrane pass occupies residues 203–223 (FFIFLLVFVVLLTILISFLAV). The Extracellular segment spans residues 224 to 266 (RPLTVSIRHGGNVTMTGVYTGINSSTLHNNLQADYSLDYTTGN). Asparagine 235 and asparagine 246 each carry an N-linked (GlcNAc...) asparagine glycan. A helical transmembrane segment spans residues 267–287 (LMNFATVFAVMFNGCTGIMAG). Over 288 to 304 (CNLSGELKQPSRSIPMG) the chain is Cytoplasmic. Residues 305-325 (TIIAVIITFFVYLILFIFTAF) form a helical membrane-spanning segment. The Extracellular portion of the chain corresponds to 326–347 (TCDRTLLREDYGFFRSINIWPP). A helical transmembrane segment spans residues 348–368 (FVLIGVYATSLSASMSTLIGA). Residues 369 to 393 (SRILHALAKDDLFGVLLAPAKLVSK) lie on the Cytoplasmic side of the membrane. The helical transmembrane segment at 394–414 (GGNPWGAVVYTWALVQLVLLA) threads the bilayer. The Extracellular portion of the chain corresponds to 415–419 (GKLNT). Residues 420-440 (IAGIVTVFYLIAYAAIDLACL) form a helical membrane-spanning segment. Over 441–469 (ALEWASAPNFRPTFRFFSWHTCLLGILSS) the chain is Cytoplasmic. The helical transmembrane segment at 470-490 (LVMMFLINPAYASGSIVLLLL) threads the bilayer. Residues 491–739 (LLGSIHFRSS…PLDLLRPQAS (249 aa)) lie on the Extracellular side of the membrane. Residues 740–760 (AYVDVCSLFLLQMACILNMAA) traverse the membrane as a helical segment. The Cytoplasmic portion of the chain corresponds to 761-899 (SWRRYQLRVF…GLTPVTCTEL (139 aa)).

The protein belongs to the SLC12A transporter family.

The protein localises to the cell membrane. It localises to the lysosome membrane. Its function is as follows. Seems to correspond to a subunit of a multimeric transport system and thus, additional subunits may be required for its function. May play a role in lysosomal ion flux and osmoregulation. The sequence is that of Solute carrier family 12 member 9 (slc12a9) from Xenopus laevis (African clawed frog).